A 250-amino-acid polypeptide reads, in one-letter code: Ubiquinone/menaquinone biosynthesis C-methyltransferase UbiE (250 aa).

S-adenosyl-L-methionine contacts are provided by residues Thr-74, Asp-94, 122 to 123, and Ser-139; that span reads DA.

This sequence belongs to the class I-like SAM-binding methyltransferase superfamily. MenG/UbiE family.

It catalyses the reaction a 2-demethylmenaquinol + S-adenosyl-L-methionine = a menaquinol + S-adenosyl-L-homocysteine + H(+). It carries out the reaction a 2-methoxy-6-(all-trans-polyprenyl)benzene-1,4-diol + S-adenosyl-L-methionine = a 5-methoxy-2-methyl-3-(all-trans-polyprenyl)benzene-1,4-diol + S-adenosyl-L-homocysteine + H(+). It participates in quinol/quinone metabolism; menaquinone biosynthesis; menaquinol from 1,4-dihydroxy-2-naphthoate: step 2/2. The protein operates within cofactor biosynthesis; ubiquinone biosynthesis. In terms of biological role, methyltransferase required for the conversion of demethylmenaquinol (DMKH2) to menaquinol (MKH2) and the conversion of 2-polyprenyl-6-methoxy-1,4-benzoquinol (DDMQH2) to 2-polyprenyl-3-methyl-6-methoxy-1,4-benzoquinol (DMQH2). This Dinoroseobacter shibae (strain DSM 16493 / NCIMB 14021 / DFL 12) protein is Ubiquinone/menaquinone biosynthesis C-methyltransferase UbiE.